Reading from the N-terminus, the 284-residue chain is UDP-N-acetylenolpyruvoylglucosamine reductase (284 aa).

The 163-residue stretch at 12-174 (KIGGRVKYLV…TRVMMSFKRE (163 aa)) folds into the FAD-binding PCMH-type domain. Arg-153 is a catalytic residue. The active-site Proton donor is Ser-203. Residue Glu-274 is part of the active site.

Belongs to the MurB family. FAD serves as cofactor.

The protein resides in the cytoplasm. The enzyme catalyses UDP-N-acetyl-alpha-D-muramate + NADP(+) = UDP-N-acetyl-3-O-(1-carboxyvinyl)-alpha-D-glucosamine + NADPH + H(+). The protein operates within cell wall biogenesis; peptidoglycan biosynthesis. Its function is as follows. Cell wall formation. The sequence is that of UDP-N-acetylenolpyruvoylglucosamine reductase from Thermotoga petrophila (strain ATCC BAA-488 / DSM 13995 / JCM 10881 / RKU-1).